The chain runs to 841 residues: Protein translocase subunit SecA (841 aa).

Residues glutamine 85, 103–107 (GEGKT), and aspartate 492 each bind ATP. Positions 790–814 (IQGQTTAHQPKEGDEEKQAKKKPVR) are disordered. The span at 798–807 (QPKEGDEEKQ) shows a compositional bias: basic and acidic residues. The Zn(2+) site is built by cysteine 825, cysteine 827, cysteine 836, and cysteine 837.

Belongs to the SecA family. In terms of assembly, monomer and homodimer. Part of the essential Sec protein translocation apparatus which comprises SecA, SecYEG and auxiliary proteins SecDF. Other proteins may also be involved. It depends on Zn(2+) as a cofactor.

The protein localises to the cell membrane. It is found in the cytoplasm. It carries out the reaction ATP + H2O + cellular proteinSide 1 = ADP + phosphate + cellular proteinSide 2.. Its function is as follows. Part of the Sec protein translocase complex. Interacts with the SecYEG preprotein conducting channel. Has a central role in coupling the hydrolysis of ATP to the transfer of proteins into and across the cell membrane, serving as an ATP-driven molecular motor driving the stepwise translocation of polypeptide chains across the membrane. This is Protein translocase subunit SecA from Bacillus licheniformis (strain ATCC 14580 / DSM 13 / JCM 2505 / CCUG 7422 / NBRC 12200 / NCIMB 9375 / NCTC 10341 / NRRL NRS-1264 / Gibson 46).